The sequence spans 117 residues: Antitoxin RelB3 (117 aa).

In terms of biological role, antitoxin component of a type II toxin-antitoxin (TA) system. Neutralizes the effect of cognate toxin RelE3, but no other RelE or ParE toxin. The polypeptide is Antitoxin RelB3 (relB3) (Caulobacter vibrioides (strain ATCC 19089 / CIP 103742 / CB 15) (Caulobacter crescentus)).